Reading from the N-terminus, the 137-residue chain is Small ribosomal subunit protein uS9 (137 aa).

Belongs to the universal ribosomal protein uS9 family.

This chain is Small ribosomal subunit protein uS9 (rps9), found in Saccharolobus solfataricus (strain ATCC 35092 / DSM 1617 / JCM 11322 / P2) (Sulfolobus solfataricus).